The chain runs to 401 residues: Argininosuccinate synthase (401 aa).

Residues 9–17 (AFSGGLDTS) and Ala-35 each bind ATP. 2 residues coordinate L-citrulline: Tyr-88 and Ser-93. Residue Gly-117 participates in ATP binding. L-aspartate-binding residues include Thr-119, Asn-123, and Asp-124. Residue Asn-123 participates in L-citrulline binding. L-citrulline-binding residues include Arg-127 and Tyr-273.

Belongs to the argininosuccinate synthase family. Type 1 subfamily. As to quaternary structure, homotetramer.

The protein resides in the cytoplasm. It carries out the reaction L-citrulline + L-aspartate + ATP = 2-(N(omega)-L-arginino)succinate + AMP + diphosphate + H(+). The protein operates within amino-acid biosynthesis; L-arginine biosynthesis; L-arginine from L-ornithine and carbamoyl phosphate: step 2/3. The polypeptide is Argininosuccinate synthase (Xylella fastidiosa (strain Temecula1 / ATCC 700964)).